The primary structure comprises 229 residues: Enolase-phosphatase E1 (229 aa).

It belongs to the HAD-like hydrolase superfamily. MasA/MtnC family. In terms of assembly, monomer. Mg(2+) serves as cofactor.

It carries out the reaction 5-methylsulfanyl-2,3-dioxopentyl phosphate + H2O = 1,2-dihydroxy-5-(methylsulfanyl)pent-1-en-3-one + phosphate. It participates in amino-acid biosynthesis; L-methionine biosynthesis via salvage pathway; L-methionine from S-methyl-5-thio-alpha-D-ribose 1-phosphate: step 3/6. The protein operates within amino-acid biosynthesis; L-methionine biosynthesis via salvage pathway; L-methionine from S-methyl-5-thio-alpha-D-ribose 1-phosphate: step 4/6. Bifunctional enzyme that catalyzes the enolization of 2,3-diketo-5-methylthiopentyl-1-phosphate (DK-MTP-1-P) into the intermediate 2-hydroxy-3-keto-5-methylthiopentenyl-1-phosphate (HK-MTPenyl-1-P), which is then dephosphorylated to form the acireductone 1,2-dihydroxy-3-keto-5-methylthiopentene (DHK-MTPene). This is Enolase-phosphatase E1 from Yersinia pseudotuberculosis serotype O:1b (strain IP 31758).